Reading from the N-terminus, the 207-residue chain is Claudin-11 (207 aa).

Position 1 (M1) is a topological domain, cytoplasmic. A helical membrane pass occupies residues 2–22 (VATCLQVVGFVTSFVGWIGVI). Residues 23-82 (VTTSTNDWVVTCGYTIPTCRKLDELGSKGLWADCVMATGLYHCKPLVDILILPGYVQACR) are Extracellular-facing. A helical membrane pass occupies residues 83–103 (ALMIAASVLGLPAILLLLTVL). Topologically, residues 104 to 122 (PCIRMGHEPGVAKYRRAQL) are cytoplasmic. Residues 123–143 (AGVLLILLALCAIVATIWFPV) form a helical membrane-spanning segment. The Extracellular segment spans residues 144–157 (CAHRETTIVSFGYS). A helical transmembrane segment spans residues 158–178 (LYAGWIGAVLCLVGGCVILCC). Residues 179–207 (AGDAQAFGENRFYYSSGSSSPTHAKSAHV) are Cytoplasmic-facing. A phosphoserine mark is found at S193, S194, S197, and S198.

Belongs to the claudin family. Interacts with tetraspanin-3/TSPAN3. Interacts with OCLN.

The protein resides in the cell junction. It localises to the tight junction. It is found in the cell membrane. Its function is as follows. Plays a major role in tight junction-specific obliteration of the intercellular space, through calcium-independent cell-adhesion activity. The chain is Claudin-11 (CLDN11) from Macaca fascicularis (Crab-eating macaque).